The chain runs to 510 residues: ATP synthase subunit alpha, chloroplastic (510 aa).

Residue 170-177 coordinates ATP; the sequence is GDRQTGKT.

This sequence belongs to the ATPase alpha/beta chains family. As to quaternary structure, F-type ATPases have 2 components, CF(1) - the catalytic core - and CF(0) - the membrane proton channel. CF(1) has five subunits: alpha(3), beta(3), gamma(1), delta(1), epsilon(1). CF(0) has four main subunits: a, b, b' and c.

The protein localises to the plastid. It is found in the chloroplast thylakoid membrane. It catalyses the reaction ATP + H2O + 4 H(+)(in) = ADP + phosphate + 5 H(+)(out). Its function is as follows. Produces ATP from ADP in the presence of a proton gradient across the membrane. The alpha chain is a regulatory subunit. In Phaseolus vulgaris (Kidney bean), this protein is ATP synthase subunit alpha, chloroplastic.